The following is a 214-amino-acid chain: Ribonuclease HII (214 aa).

Residues serine 27–valine 214 enclose the RNase H type-2 domain. Residues aspartate 33, glutamate 34, and aspartate 126 each contribute to the a divalent metal cation site.

This sequence belongs to the RNase HII family. Requires Mn(2+) as cofactor. It depends on Mg(2+) as a cofactor.

Its subcellular location is the cytoplasm. The enzyme catalyses Endonucleolytic cleavage to 5'-phosphomonoester.. Endonuclease that specifically degrades the RNA of RNA-DNA hybrids. The protein is Ribonuclease HII (rnhB) of Chlamydia pneumoniae (Chlamydophila pneumoniae).